We begin with the raw amino-acid sequence, 182 residues long: Adenine phosphoribosyltransferase (182 aa).

This sequence belongs to the purine/pyrimidine phosphoribosyltransferase family. In terms of assembly, homodimer.

The protein localises to the cytoplasm. It carries out the reaction AMP + diphosphate = 5-phospho-alpha-D-ribose 1-diphosphate + adenine. It participates in purine metabolism; AMP biosynthesis via salvage pathway; AMP from adenine: step 1/1. In terms of biological role, catalyzes a salvage reaction resulting in the formation of AMP, that is energically less costly than de novo synthesis. This is Adenine phosphoribosyltransferase from Campylobacter curvus (strain 525.92).